The following is a 263-amino-acid chain: MSIVTFTLTDPSSALIAEIMQAIERHNVSVPEGLRDISKPTKKKQQSQPQQLSRASARPQQLQPGPSGYQAKKPAKQKAEVVKPKQKQLAPPINKKAAKAKLYGLEQHCPKYAEAKGLQKQIGMTYYKISEPYALPDFKVMEASEDLVAVSEKDPMGSFEKRLYSMGFPKRPIKNVVPVFEFSDHYIVVFFPGSNAEIVKNVPKDSVSDYAEAQLAALLAARQQINQIHELGDILPTNYLNVLDSGTQDVVVSDEEDDSDSAQ.

A compositionally biased stretch (basic and acidic residues) spans 30–39; that stretch reads VPEGLRDISK. Positions 30–93 are disordered; the sequence is VPEGLRDISK…PKQKQLAPPI (64 aa). Polar residues predominate over residues 52 to 64; the sequence is LSRASARPQQLQP.

In Citrus sinensis (Sweet orange), this protein is P29 (p29).